Here is a 363-residue protein sequence, read N- to C-terminus: Flagellar P-ring protein (363 aa).

The first 20 residues, 1-20, serve as a signal peptide directing secretion; that stretch reads MKKLTLVLFGMLFLASSAHA.

Belongs to the FlgI family. The basal body constitutes a major portion of the flagellar organelle and consists of four rings (L,P,S, and M) mounted on a central rod.

The protein localises to the periplasm. The protein resides in the bacterial flagellum basal body. Functionally, assembles around the rod to form the L-ring and probably protects the motor/basal body from shearing forces during rotation. In Vibrio atlanticus (strain LGP32) (Vibrio splendidus (strain Mel32)), this protein is Flagellar P-ring protein.